We begin with the raw amino-acid sequence, 1071 residues long: DNA-directed RNA polymerase subunit beta (1071 aa).

This sequence belongs to the RNA polymerase beta chain family. In terms of assembly, in plastids the minimal PEP RNA polymerase catalytic core is composed of four subunits: alpha, beta, beta', and beta''. When a (nuclear-encoded) sigma factor is associated with the core the holoenzyme is formed, which can initiate transcription.

The protein localises to the plastid. The protein resides in the chloroplast. It catalyses the reaction RNA(n) + a ribonucleoside 5'-triphosphate = RNA(n+1) + diphosphate. In terms of biological role, DNA-dependent RNA polymerase catalyzes the transcription of DNA into RNA using the four ribonucleoside triphosphates as substrates. This chain is DNA-directed RNA polymerase subunit beta, found in Anthoceros angustus (Hornwort).